Reading from the N-terminus, the 232-residue chain is Large ribosomal subunit protein uL1 (232 aa).

Belongs to the universal ribosomal protein uL1 family. Part of the 50S ribosomal subunit.

Functionally, binds directly to 23S rRNA. The L1 stalk is quite mobile in the ribosome, and is involved in E site tRNA release. Protein L1 is also a translational repressor protein, it controls the translation of the L11 operon by binding to its mRNA. This chain is Large ribosomal subunit protein uL1, found in Chlamydia trachomatis serovar D (strain ATCC VR-885 / DSM 19411 / UW-3/Cx).